The chain runs to 393 residues: Acetylornithine aminotransferase (393 aa).

Pyridoxal 5'-phosphate is bound by residues 100–101 (GA) and Phe-133. N(2)-acetyl-L-ornithine is bound at residue Arg-136. 218–221 (DEVQ) lines the pyridoxal 5'-phosphate pocket. Lys-247 carries the post-translational modification N6-(pyridoxal phosphate)lysine. Ser-274 provides a ligand contact to N(2)-acetyl-L-ornithine. Thr-275 contributes to the pyridoxal 5'-phosphate binding site.

It belongs to the class-III pyridoxal-phosphate-dependent aminotransferase family. ArgD subfamily. In terms of assembly, homodimer. Pyridoxal 5'-phosphate serves as cofactor.

The protein localises to the cytoplasm. The catalysed reaction is N(2)-acetyl-L-ornithine + 2-oxoglutarate = N-acetyl-L-glutamate 5-semialdehyde + L-glutamate. It participates in amino-acid biosynthesis; L-arginine biosynthesis; N(2)-acetyl-L-ornithine from L-glutamate: step 4/4. The polypeptide is Acetylornithine aminotransferase (Caldanaerobacter subterraneus subsp. tengcongensis (strain DSM 15242 / JCM 11007 / NBRC 100824 / MB4) (Thermoanaerobacter tengcongensis)).